Consider the following 2252-residue polypeptide: RNA1 polyprotein (2252 aa).

The Cytoplasmic segment spans residues 565-1140 (MITTLAQSIF…QGREFIVSNG (576 aa)). Residues 733 to 899 (MKDLLELQKR…PGVIFDPDNA (167 aa)) form the SF3 helicase domain. 763-770 (GPSHCGKS) is an ATP binding site. Residues 1141-1161 (GGILMIAAAIILVLVCGWGFW) traverse the membrane as a helical segment. The Lumenal segment spans residues 1162-1187 (KAFVGLFTGSMSLGAALAGCQEAEVK). The Peptidase C3 domain occupies 1213 to 1422 (SYARSQAGNG…WACILPNPHL (210 aa)). Catalysis depends on for picornain 3C-like protease activity residues histidine 1256, glutamate 1294, and cysteine 1386. Residues 1697–1825 (NEAINCDYSG…SVSPAVASWF (129 aa)) form the RdRp catalytic domain.

The protein belongs to the nepoviruses RNA1 polyprotein family. In terms of processing, specific enzymatic cleavages by picornain 3C-like protease in vivo yield mature proteins. Picornain 3C-like protease is autocatalytically processed. Post-translationally, VPg is uridylylated by the polymerase and is covalently linked to the 5'-end of genomic RNA. This uridylylated form acts as a nucleotide-peptide primer for the polymerase.

It localises to the host endoplasmic reticulum lumen. It is found in the host endoplasmic reticulum membrane. The catalysed reaction is RNA(n) + a ribonucleoside 5'-triphosphate = RNA(n+1) + diphosphate. Functionally, picornain 3C-like protease is a thiol protease that cleaves the P1 and P2 polyproteins. This chain is RNA1 polyprotein, found in Apium graveolens (Celery).